Reading from the N-terminus, the 1172-residue chain is Structural maintenance of chromosomes protein 2 (1172 aa).

Residue 32-39 (GLNGSGKS) participates in ATP binding. Coiled coils occupy residues 172–204 (RMFE…EEIE) and 258–507 (SHIA…AYME). Positions 520–640 (SKVKGLVAQL…CDTPESAKKV (121 aa)) constitute an SMC hinge domain. Positions 676–941 (LLQIQKLNSL…INHLEKENDW (266 aa)) form a coiled coil.

Belongs to the SMC family. SMC2 subfamily. As to quaternary structure, forms a heterodimer with cut3/smc4. Component of the condensin complex, which contains the cut3 and cut14 heterodimer, and three non smc subunits that probably regulate the complex: cnd1, cnd2 and cnd3.

The protein resides in the nucleus. It is found in the cytoplasm. Its subcellular location is the chromosome. Functionally, central component of the condensin complex, a complex required for conversion of interphase chromatin into mitotic-like condense chromosomes. The condensin complex probably introduces positive supercoils into relaxed DNA in the presence of type I topoisomerases and converts nicked DNA into positive knotted forms in the presence of type II topoisomerases. This is Structural maintenance of chromosomes protein 2 (cut14) from Schizosaccharomyces pombe (strain 972 / ATCC 24843) (Fission yeast).